We begin with the raw amino-acid sequence, 239 residues long: Proteasome subunit beta (239 aa).

The span at 1–16 (MRQPDSSLPRTGQDHT) shows a compositional bias: polar residues. Positions 1-32 (MRQPDSSLPRTGQDHTLSPYEPELGEVPSNDL) are disordered. The propeptide at 1 to 44 (MRQPDSSLPRTGQDHTLSPYEPELGEVPSNDLSMADLDNVNKTG) is removed in mature form; by autocatalysis. Catalysis depends on Thr45, which acts as the Nucleophile.

Belongs to the peptidase T1B family. In terms of assembly, the 20S proteasome core is composed of 14 alpha and 14 beta subunits that assemble into four stacked heptameric rings, resulting in a barrel-shaped structure. The two inner rings, each composed of seven catalytic beta subunits, are sandwiched by two outer rings, each composed of seven alpha subunits. The catalytic chamber with the active sites is on the inside of the barrel. Has a gated structure, the ends of the cylinder being occluded by the N-termini of the alpha-subunits. Is capped at one or both ends by the proteasome regulatory ATPase, PAN.

Its subcellular location is the cytoplasm. It catalyses the reaction Cleavage of peptide bonds with very broad specificity.. With respect to regulation, the formation of the proteasomal ATPase PAN-20S proteasome complex, via the docking of the C-termini of PAN into the intersubunit pockets in the alpha-rings, triggers opening of the gate for substrate entry. Interconversion between the open-gate and close-gate conformations leads to a dynamic regulation of the 20S proteasome proteolysis activity. Its function is as follows. Component of the proteasome core, a large protease complex with broad specificity involved in protein degradation. The chain is Proteasome subunit beta from Natronomonas pharaonis (strain ATCC 35678 / DSM 2160 / CIP 103997 / JCM 8858 / NBRC 14720 / NCIMB 2260 / Gabara) (Halobacterium pharaonis).